The chain runs to 277 residues: Diaminopimelate epimerase (277 aa).

2 residues coordinate substrate: asparagine 11 and asparagine 62. The active-site Proton donor is cysteine 71. Substrate contacts are provided by residues 72-73 (GN), asparagine 160, asparagine 193, and 211-212 (ER). Catalysis depends on cysteine 220, which acts as the Proton acceptor. 221–222 (GT) is a binding site for substrate.

The protein belongs to the diaminopimelate epimerase family. In terms of assembly, homodimer.

The protein localises to the cytoplasm. The catalysed reaction is (2S,6S)-2,6-diaminopimelate = meso-2,6-diaminopimelate. Its pathway is amino-acid biosynthesis; L-lysine biosynthesis via DAP pathway; DL-2,6-diaminopimelate from LL-2,6-diaminopimelate: step 1/1. Its function is as follows. Catalyzes the stereoinversion of LL-2,6-diaminopimelate (L,L-DAP) to meso-diaminopimelate (meso-DAP), a precursor of L-lysine. This chain is Diaminopimelate epimerase, found in Methanococcus maripaludis (strain DSM 14266 / JCM 13030 / NBRC 101832 / S2 / LL).